Here is a 98-residue protein sequence, read N- to C-terminus: Aspartyl/glutamyl-tRNA(Asn/Gln) amidotransferase subunit C (98 aa).

The interval 75-98 (AQALSGAPAQEQQRFKVPQILGED) is disordered.

This sequence belongs to the GatC family. As to quaternary structure, heterotrimer of A, B and C subunits.

It catalyses the reaction L-glutamyl-tRNA(Gln) + L-glutamine + ATP + H2O = L-glutaminyl-tRNA(Gln) + L-glutamate + ADP + phosphate + H(+). The enzyme catalyses L-aspartyl-tRNA(Asn) + L-glutamine + ATP + H2O = L-asparaginyl-tRNA(Asn) + L-glutamate + ADP + phosphate + 2 H(+). Allows the formation of correctly charged Asn-tRNA(Asn) or Gln-tRNA(Gln) through the transamidation of misacylated Asp-tRNA(Asn) or Glu-tRNA(Gln) in organisms which lack either or both of asparaginyl-tRNA or glutaminyl-tRNA synthetases. The reaction takes place in the presence of glutamine and ATP through an activated phospho-Asp-tRNA(Asn) or phospho-Glu-tRNA(Gln). In Streptomyces griseus subsp. griseus (strain JCM 4626 / CBS 651.72 / NBRC 13350 / KCC S-0626 / ISP 5235), this protein is Aspartyl/glutamyl-tRNA(Asn/Gln) amidotransferase subunit C.